A 119-amino-acid polypeptide reads, in one-letter code: Protein TusC (119 aa).

This sequence belongs to the DsrF/TusC family. Heterohexamer, formed by a dimer of trimers. The hexameric TusBCD complex contains 2 copies each of TusB, TusC and TusD. The TusBCD complex interacts with TusE.

The protein resides in the cytoplasm. In terms of biological role, part of a sulfur-relay system required for 2-thiolation of 5-methylaminomethyl-2-thiouridine (mnm(5)s(2)U) at tRNA wobble positions. The protein is Protein TusC of Buchnera aphidicola subsp. Acyrthosiphon pisum (strain 5A).